The chain runs to 456 residues: Phosphomethylpyrimidine synthase (456 aa).

Residues Asn-80, Met-109, Tyr-139, His-175, 195 to 197 (SRG), 236 to 239 (DSLR), and Glu-275 each bind substrate. His-279 is a binding site for Zn(2+). Substrate is bound at residue Tyr-302. Residue His-343 coordinates Zn(2+). 3 residues coordinate [4Fe-4S] cluster: Cys-423, Cys-426, and Cys-431.

This sequence belongs to the ThiC family. It depends on [4Fe-4S] cluster as a cofactor.

The enzyme catalyses 5-amino-1-(5-phospho-beta-D-ribosyl)imidazole + S-adenosyl-L-methionine = 4-amino-2-methyl-5-(phosphooxymethyl)pyrimidine + CO + 5'-deoxyadenosine + formate + L-methionine + 3 H(+). The protein operates within cofactor biosynthesis; thiamine diphosphate biosynthesis. In terms of biological role, catalyzes the synthesis of the hydroxymethylpyrimidine phosphate (HMP-P) moiety of thiamine from aminoimidazole ribotide (AIR) in a radical S-adenosyl-L-methionine (SAM)-dependent reaction. The chain is Phosphomethylpyrimidine synthase from Synechococcus sp. (strain ATCC 27144 / PCC 6301 / SAUG 1402/1) (Anacystis nidulans).